A 206-amino-acid polypeptide reads, in one-letter code: Ribosomal RNA small subunit methyltransferase G (206 aa).

S-adenosyl-L-methionine-binding positions include G73, L78, 124–125 (VE), and R139.

It belongs to the methyltransferase superfamily. RNA methyltransferase RsmG family.

Its subcellular location is the cytoplasm. The enzyme catalyses guanosine(527) in 16S rRNA + S-adenosyl-L-methionine = N(7)-methylguanosine(527) in 16S rRNA + S-adenosyl-L-homocysteine. Functionally, specifically methylates the N7 position of guanine in position 527 of 16S rRNA. The protein is Ribosomal RNA small subunit methyltransferase G of Idiomarina loihiensis (strain ATCC BAA-735 / DSM 15497 / L2-TR).